The sequence spans 730 residues: Exostosin-1a (730 aa).

The Cytoplasmic segment spans residues 1–6 (MQAKKR). Residues 7-27 (YLILFSAGVCLILLFYLQGPA) form a helical; Signal-anchor for type II membrane protein membrane-spanning segment. The Lumenal portion of the chain corresponds to 28–730 (SRRTPKRGDD…RKKYRDIERL (703 aa)). N-linked (GlcNAc...) asparagine glycosylation is present at Asn314. UDP-N-acetyl-alpha-D-glucosamine is bound by residues Arg533, Asp549, Glu550, Asp551, Glu637, Asp638, and Arg685. Asp551 lines the Mn(2+) pocket. A disulfide bridge connects residues Cys636 and Cys688. Asp638 is an active-site residue.

This sequence belongs to the glycosyltransferase 47 family. It depends on Mn(2+) as a cofactor.

It is found in the endoplasmic reticulum membrane. The enzyme catalyses 3-O-{[(1-&gt;4)-beta-D-GlcA-(1-&gt;4)-alpha-D-GlcNAc](n)-(1-&gt;4)-beta-D-GlcA-(1-&gt;3)-beta-D-Gal-(1-&gt;3)-beta-D-Gal-(1-&gt;4)-beta-D-Xyl}-L-seryl-[protein] + UDP-N-acetyl-alpha-D-glucosamine = 3-O-{alpha-D-GlcNAc-[(1-&gt;4)-beta-D-GlcA-(1-&gt;4)-alpha-D-GlcNAc](n)-(1-&gt;4)-beta-D-GlcA-(1-&gt;3)-beta-D-Gal-(1-&gt;3)-beta-D-Gal-(1-&gt;4)-beta-D-Xyl}-L-seryl-[protein] + UDP + H(+). It catalyses the reaction 3-O-{alpha-D-GlcNAc-[(1-&gt;4)-beta-D-GlcA-(1-&gt;4)-alpha-D-GlcNAc](n)-(1-&gt;4)-beta-D-GlcA-(1-&gt;3)-beta-D-Gal-(1-&gt;3)-beta-D-Gal-(1-&gt;4)-beta-D-Xyl}-L-seryl-[protein] + UDP-alpha-D-glucuronate = 3-O-{[(1-&gt;4)-beta-D-GlcA-(1-&gt;4)-alpha-D-GlcNAc](n+1)-(1-&gt;4)-beta-D-GlcA-(1-&gt;3)-beta-D-Gal-(1-&gt;3)-beta-D-Gal-(1-&gt;4)-beta-D-Xyl}-L-seryl-[protein] + UDP + H(+). It participates in protein modification; protein glycosylation. Functionally, glycosyltransferase required for the biosynthesis of heparan-sulfate. This Danio rerio (Zebrafish) protein is Exostosin-1a (ext1a).